The sequence spans 227 residues: 2,3-bisphosphoglycerate-dependent phosphoglycerate mutase (227 aa).

Substrate-binding positions include 7-14 (RHGFSEWN), 20-21 (TG), Arg59, 86-89 (ERHY), Lys97, 113-114 (RR), and 182-183 (GN). His8 serves as the catalytic Tele-phosphohistidine intermediate. Glu86 (proton donor/acceptor) is an active-site residue.

It belongs to the phosphoglycerate mutase family. BPG-dependent PGAM subfamily. In terms of assembly, homodimer.

The enzyme catalyses (2R)-2-phosphoglycerate = (2R)-3-phosphoglycerate. Its pathway is carbohydrate degradation; glycolysis; pyruvate from D-glyceraldehyde 3-phosphate: step 3/5. Functionally, catalyzes the interconversion of 2-phosphoglycerate and 3-phosphoglycerate. This Actinobacillus pleuropneumoniae serotype 5b (strain L20) protein is 2,3-bisphosphoglycerate-dependent phosphoglycerate mutase.